Here is a 389-residue protein sequence, read N- to C-terminus: Na(+)/H(+) antiporter NhaA (389 aa).

The next 11 membrane-spanning stretches (helical) occupy residues 17–37 (ILLL…LAGL), 59–79 (LLLW…GLEV), 95–115 (SLPT…YLLF), 124–144 (AGWA…MALL), 154–174 (VFLL…IALF), 177–197 (TDLS…LVAL), 213–233 (LVLW…GVII), 261–281 (FLIL…NMSL), 287–307 (PVPV…VMLF), 328–348 (IAPV…IASL), and 363–383 (LGTL…LSKV).

It belongs to the NhaA Na(+)/H(+) (TC 2.A.33) antiporter family.

Its subcellular location is the cell inner membrane. It catalyses the reaction Na(+)(in) + 2 H(+)(out) = Na(+)(out) + 2 H(+)(in). In terms of biological role, na(+)/H(+) antiporter that extrudes sodium in exchange for external protons. This Shewanella sp. (strain MR-7) protein is Na(+)/H(+) antiporter NhaA.